The chain runs to 200 residues: Holliday junction branch migration complex subunit RuvA (200 aa).

The tract at residues 1–63 (MIAFVRGQVA…EDSLTLFGFA (63 aa)) is domain I. Residues 64 to 142 (DEDEKQTFEL…APTGAGRSAG (79 aa)) are domain II. Residues 142-146 (GVPAP) are flexible linker. A domain III region spans residues 147-200 (AGAVWRDQVHQGLVGLGWPVRDAEKAVAAVAPEAGDVPDVAALLRAALRTLSKA).

This sequence belongs to the RuvA family. Homotetramer. Forms an RuvA(8)-RuvB(12)-Holliday junction (HJ) complex. HJ DNA is sandwiched between 2 RuvA tetramers; dsDNA enters through RuvA and exits via RuvB. An RuvB hexamer assembles on each DNA strand where it exits the tetramer. Each RuvB hexamer is contacted by two RuvA subunits (via domain III) on 2 adjacent RuvB subunits; this complex drives branch migration. In the full resolvosome a probable DNA-RuvA(4)-RuvB(12)-RuvC(2) complex forms which resolves the HJ.

The protein localises to the cytoplasm. In terms of biological role, the RuvA-RuvB-RuvC complex processes Holliday junction (HJ) DNA during genetic recombination and DNA repair, while the RuvA-RuvB complex plays an important role in the rescue of blocked DNA replication forks via replication fork reversal (RFR). RuvA specifically binds to HJ cruciform DNA, conferring on it an open structure. The RuvB hexamer acts as an ATP-dependent pump, pulling dsDNA into and through the RuvAB complex. HJ branch migration allows RuvC to scan DNA until it finds its consensus sequence, where it cleaves and resolves the cruciform DNA. This chain is Holliday junction branch migration complex subunit RuvA, found in Nocardioides sp. (strain ATCC BAA-499 / JS614).